A 102-amino-acid chain; its full sequence is Methane monooxygenase component D (102 aa).

As to quaternary structure, the soluble methane monooxygenase (sMMO) consists of four components A/MMOH (composed of alpha/MmoX, beta/MmoY and gamma/MmoZ), B/MMOB (MmoB), C/MMOR (MmoC) and D/MMOD (MmoD).

The chain is Methane monooxygenase component D (mmoD) from Methylosinus trichosporium.